Reading from the N-terminus, the 421-residue chain is MQGQQKQNAGGGGGDNASPCIVLDGPIIVGAGPSGLAVAATLRQHGAPFTVVERSGGVADLWTNRTYDRLRLHLPKVFCELPHVAFPPDFPTYPTKHDFLRYLHSYAARFAIAPLLRRTVTRAWYDHPASLWRVTTTTTSSSATSVITEYASPWLVVASGENAEVVVPKVKGRERFAGEALHSSEYRSGERFRGMRVLVVGCGNSGMEMCLDLCEHGAMPFMSVRSGVHVLPREMFGASTFGIAMKLLRWLPIKMVDRFLLLVARMVLGDTEKYGLKRPKLGPLEIKNITGKSPVLDVGAWSLIKSGNIKIVPEVESFSGNGARFVDGNEMAFDAVIFATGYRSNVPSWLQEDGELFTEEGKLRSSGSSSEWRWRGPNGLYCVGFSGRGLLGAGADALRAAADIAGRWQETQQAAANISSV.

30-35 contributes to the FAD binding site; the sequence is GAGPSG. 201–206 is an NADP(+) binding site; the sequence is GCGNSG.

The protein belongs to the FMO family. It depends on FAD as a cofactor. As to expression, expressed in organs undergoing active growth and cell division.

The protein localises to the endoplasmic reticulum. It carries out the reaction indole-3-pyruvate + NADPH + O2 + H(+) = (indol-3-yl)acetate + CO2 + NADP(+) + H2O. Functionally, involved in auxin biosynthesis. Converts the indole-3-pyruvic acid (IPA) produced by the TAA family to indole-3-acetic acid (IAA). Seems not able to use tryptamine (TAM) as substrate. Probably responsible for auxin biosynthesis in leaves and involved in the regulation of lateral leaf growth. Required for maintaining water homeostasis and an appropriate root to shoot ratio. Required for the inhibition of root growth by ethylene in etiolated seedlings. Functions downstream of the ethylene-response transcription factor EIL1. This Oryza sativa subsp. indica (Rice) protein is Indole-3-pyruvate monooxygenase YUCCA8.